The following is a 205-amino-acid chain: Peptidyl-prolyl cis-trans isomerase B (205 aa).

The first 20 residues, 1–20 (MKFSGLWCWLLLFLSVNVIA), serve as a signal peptide directing secretion. Residues 39 to 198 (FFDIEHGEEK…EAVKIAKCGE (160 aa)) enclose the PPIase cyclophilin-type domain.

It belongs to the cyclophilin-type PPIase family. PPIase B subfamily.

The protein localises to the secreted. The catalysed reaction is [protein]-peptidylproline (omega=180) = [protein]-peptidylproline (omega=0). With respect to regulation, cyclosporin A (CsA) inhibits CYPB. Its function is as follows. PPIases accelerate the folding of proteins. It catalyzes the cis-trans isomerization of proline imidic peptide bonds in oligopeptides. The chain is Peptidyl-prolyl cis-trans isomerase B (CPR2) from Saccharomyces cerevisiae (strain ATCC 204508 / S288c) (Baker's yeast).